The chain runs to 253 residues: Sulfate transporter CysZ (253 aa).

A run of 4 helical transmembrane segments spans residues 31–51, 75–95, 151–171, and 222–242; these read FVIL…WWLF, LLWP…FSTI, IVLL…PVLW, and IPVL…AMWV.

This sequence belongs to the CysZ family.

Its subcellular location is the cell inner membrane. In terms of biological role, high affinity, high specificity proton-dependent sulfate transporter, which mediates sulfate uptake. Provides the sulfur source for the cysteine synthesis pathway. The polypeptide is Sulfate transporter CysZ (Citrobacter koseri (strain ATCC BAA-895 / CDC 4225-83 / SGSC4696)).